The chain runs to 391 residues: ATP phosphoribosyltransferase regulatory subunit (391 aa).

This sequence belongs to the class-II aminoacyl-tRNA synthetase family. HisZ subfamily. In terms of assembly, heteromultimer composed of HisG and HisZ subunits.

It is found in the cytoplasm. It functions in the pathway amino-acid biosynthesis; L-histidine biosynthesis; L-histidine from 5-phospho-alpha-D-ribose 1-diphosphate: step 1/9. Required for the first step of histidine biosynthesis. May allow the feedback regulation of ATP phosphoribosyltransferase activity by histidine. The polypeptide is ATP phosphoribosyltransferase regulatory subunit (Bacillus pumilus (strain SAFR-032)).